The sequence spans 75 residues: MFTMKKSLLFLFFLGTISLSFCEEERGADEDDGGEMTEEEKRGVLDTLKNVAIGVAKGAGTGVLKALLCQLDKSC.

Residues 1-22 form the signal peptide; that stretch reads MFTMKKSLLFLFFLGTISLSFC. A propeptide spans 23 to 40 (removed in mature form); sequence EEERGADEDDGGEMTEEE. C69 and C75 form a disulfide bridge.

It belongs to the frog skin active peptide (FSAP) family. Brevinin subfamily. In terms of tissue distribution, expressed by the skin glands.

It is found in the secreted. In terms of biological role, antimicrobial peptide. Active against some Gram-negative and a variety of Gram-positive bacterial strains. Active against fungus C.glabrata 090902 but not against C.albicans ATCC 10231. Shows hemolytic activity against human erythrocytes. The protein is Brevinin-2SN2 of Sylvirana spinulosa (Fine-spined frog).